The sequence spans 242 residues: tRNA uridine(34) hydroxylase (242 aa).

In terms of domain architecture, Rhodanese spans 128-222; it reads DGREVVMLDT…YFEETGGPGY (95 aa). The active-site Cysteine persulfide intermediate is the Cys-182.

This sequence belongs to the TrhO family.

The enzyme catalyses uridine(34) in tRNA + AH2 + O2 = 5-hydroxyuridine(34) in tRNA + A + H2O. Functionally, catalyzes oxygen-dependent 5-hydroxyuridine (ho5U) modification at position 34 in tRNAs. This chain is tRNA uridine(34) hydroxylase, found in Bordetella avium (strain 197N).